Here is a 272-residue protein sequence, read N- to C-terminus: Imidazole glycerol phosphate synthase subunit HisF (272 aa).

Catalysis depends on residues Asp-11 and Asp-130.

This sequence belongs to the HisA/HisF family. Heterodimer of HisH and HisF.

Its subcellular location is the cytoplasm. It carries out the reaction 5-[(5-phospho-1-deoxy-D-ribulos-1-ylimino)methylamino]-1-(5-phospho-beta-D-ribosyl)imidazole-4-carboxamide + L-glutamine = D-erythro-1-(imidazol-4-yl)glycerol 3-phosphate + 5-amino-1-(5-phospho-beta-D-ribosyl)imidazole-4-carboxamide + L-glutamate + H(+). Its pathway is amino-acid biosynthesis; L-histidine biosynthesis; L-histidine from 5-phospho-alpha-D-ribose 1-diphosphate: step 5/9. In terms of biological role, IGPS catalyzes the conversion of PRFAR and glutamine to IGP, AICAR and glutamate. The HisF subunit catalyzes the cyclization activity that produces IGP and AICAR from PRFAR using the ammonia provided by the HisH subunit. The chain is Imidazole glycerol phosphate synthase subunit HisF from Methanococcus maripaludis (strain DSM 14266 / JCM 13030 / NBRC 101832 / S2 / LL).